We begin with the raw amino-acid sequence, 271 residues long: Malonyl-[acyl-carrier protein] O-methyltransferase (271 aa).

The protein belongs to the methyltransferase superfamily.

It catalyses the reaction malonyl-[ACP] + S-adenosyl-L-methionine = malonyl-[ACP] methyl ester + S-adenosyl-L-homocysteine. It participates in cofactor biosynthesis; biotin biosynthesis. In terms of biological role, converts the free carboxyl group of a malonyl-thioester to its methyl ester by transfer of a methyl group from S-adenosyl-L-methionine (SAM). It allows to synthesize pimeloyl-ACP via the fatty acid synthetic pathway. The protein is Malonyl-[acyl-carrier protein] O-methyltransferase of Halalkalibacterium halodurans (strain ATCC BAA-125 / DSM 18197 / FERM 7344 / JCM 9153 / C-125) (Bacillus halodurans).